The chain runs to 230 residues: Ribonuclease 3 (230 aa).

Residues 10–133 (DPRLQSRIGY…IIGAIYVDSN (124 aa)) form the RNase III domain. Residue Glu46 coordinates Mg(2+). Residue Asp50 is part of the active site. Mg(2+) contacts are provided by Asp119 and Glu122. Glu122 is an active-site residue. The DRBM domain maps to 161–230 (DPKSRLQEYL…AAEILKLLEQ (70 aa)).

Belongs to the ribonuclease III family. In terms of assembly, homodimer. Requires Mg(2+) as cofactor.

It localises to the cytoplasm. It carries out the reaction Endonucleolytic cleavage to 5'-phosphomonoester.. Its function is as follows. Digests double-stranded RNA. Involved in the processing of primary rRNA transcript to yield the immediate precursors to the large and small rRNAs (23S and 16S). Processes some mRNAs, and tRNAs when they are encoded in the rRNA operon. Processes pre-crRNA and tracrRNA of type II CRISPR loci if present in the organism. In Acinetobacter baylyi (strain ATCC 33305 / BD413 / ADP1), this protein is Ribonuclease 3.